Here is a 409-residue protein sequence, read N- to C-terminus: Arginine deiminase (409 aa).

Cys399 functions as the Amidino-cysteine intermediate in the catalytic mechanism.

The protein belongs to the arginine deiminase family.

It localises to the cytoplasm. It catalyses the reaction L-arginine + H2O = L-citrulline + NH4(+). Its pathway is amino-acid degradation; L-arginine degradation via ADI pathway; carbamoyl phosphate from L-arginine: step 1/2. The polypeptide is Arginine deiminase (Streptococcus sanguinis (strain SK36)).